A 288-amino-acid polypeptide reads, in one-letter code: Aquaporin PIP2-4 (288 aa).

A disordered region spans residues 1-24 (MAKDIEASGPEAGEFSAKDYTDPP). Helical transmembrane passes span 42–62 (AVIA…ATVI) and 79–99 (CGGV…FILV). Positions 111–113 (NPA) match the NPA 1 motif. 3 helical membrane-spanning segments follow: residues 130–150 (LLYI…VKGF), 172–192 (GTGL…VFSA), and 206–226 (VLAP…TIPI). Positions 232–234 (NPA) match the NPA 2 motif. A helical transmembrane segment spans residues 254-274 (IFWVGPLIGAAIAAAYHQYVL).

Belongs to the MIP/aquaporin (TC 1.A.8) family. PIP (TC 1.A.8.11) subfamily. In terms of assembly, homomers. May interact with PIP1-2 to form heteromers. As to expression, expressed in the root growing zone at 5-6 mm from the root tip.

The protein localises to the cell membrane. Functionally, water channel required to facilitate the transport of water across cell membrane. Active as homomers. Increased activity when heteromerization with PIP1-2. This is Aquaporin PIP2-4 (PIP2-4) from Zea mays (Maize).